Reading from the N-terminus, the 145-residue chain is Endoribonuclease YbeY (145 aa).

The Zn(2+) site is built by His-109, His-113, and His-119.

The protein belongs to the endoribonuclease YbeY family. It depends on Zn(2+) as a cofactor.

It is found in the cytoplasm. Single strand-specific metallo-endoribonuclease involved in late-stage 70S ribosome quality control and in maturation of the 3' terminus of the 16S rRNA. In Vesicomyosocius okutanii subsp. Calyptogena okutanii (strain HA), this protein is Endoribonuclease YbeY.